The following is a 61-amino-acid chain: UPF0370 protein Spro_3503 (61 aa).

Residues 3 to 23 (WLADYWWIILLILVGMIISGI) traverse the membrane as a helical segment. Residues 38 to 48 (KPELPPHRDNN) show a composition bias toward basic and acidic residues. The tract at residues 38-61 (KPELPPHRDNNAEWDDDDDWPKKK) is disordered. Residues 49–61 (AEWDDDDDWPKKK) show a composition bias toward acidic residues.

Belongs to the UPF0370 family.

Its subcellular location is the cell membrane. The chain is UPF0370 protein Spro_3503 from Serratia proteamaculans (strain 568).